The chain runs to 189 residues: Casparian strip membrane protein 2 (189 aa).

A disordered region spans residues methionine 1–glycine 21. The Cytoplasmic portion of the chain corresponds to methionine 1–glycine 25. Residues leucine 26–leucine 46 traverse the membrane as a helical segment. Over serine 47–threonine 73 the chain is Extracellular. The chain crosses the membrane as a helical span at residues phenylalanine 74–leucine 94. At serine 95–arginine 108 the chain is on the cytoplasmic side. A helical membrane pass occupies residues isoleucine 109–alanine 129. The Extracellular portion of the chain corresponds to alanine 130–leucine 163. A helical transmembrane segment spans residues valine 164–isoleucine 184. The Cytoplasmic segment spans residues serine 185–histidine 189.

It belongs to the Casparian strip membrane proteins (CASP) family. In terms of assembly, homodimer and heterodimers.

The protein localises to the cell membrane. In terms of biological role, regulates membrane-cell wall junctions and localized cell wall deposition. Required for establishment of the Casparian strip membrane domain (CSD) and the subsequent formation of Casparian strips, a cell wall modification of the root endodermis that determines an apoplastic barrier between the intraorganismal apoplasm and the extraorganismal apoplasm and prevents lateral diffusion. This Medicago truncatula (Barrel medic) protein is Casparian strip membrane protein 2.